Here is a 1610-residue protein sequence, read N- to C-terminus: Voltage-dependent L-type calcium channel subunit alpha-1D (1610 aa).

The interval 1-99 is disordered; that stretch reads MMMMMMKKMQ…SKKQGNSSNS (99 aa). The Cytoplasmic segment spans residues 1–125; that stretch reads MMMMMMKKMQ…RACISIVEWK (125 aa). Polar residues predominate over residues 37–51; sequence GPTSQPNSSKQTVLS. The span at 53–66 shows a compositional bias: low complexity; that stretch reads QAAIDAARQAKAAQ. A compositionally biased stretch (basic residues) spans 81-92; it reads QRKRQQYAKSKK. One copy of the I repeat lies at 112–408; the sequence is NPIRRACISI…LVLGVLSGEF (297 aa). Residues 126–144 form a helical membrane-spanning segment; sequence PFDIFILLAIFANCVALAI. The Extracellular segment spans residues 145–162; the sequence is YIPFPEDDSNSTNHNLEK. N-linked (GlcNAc...) asparagine glycosylation is present at Asn154. A helical membrane pass occupies residues 163–182; that stretch reads VEYAFLIIFTVETFLKIIAY. The Cytoplasmic portion of the chain corresponds to 183–194; sequence GLLLHPNAYVRN. The helical transmembrane segment at 195–213 threads the bilayer; that stretch reads GWNLLDFVIVIVGLFSVIL. Topologically, residues 214–234 are extracellular; that stretch reads EQLTKETEGGNHSSGKSGGFD. The N-linked (GlcNAc...) asparagine glycan is linked to Asn224. A helical transmembrane segment spans residues 235-253; sequence VKALRAFRVLRPLRLVSGV. Topologically, residues 254–272 are cytoplasmic; it reads PSLQVVLNSIIKAMVPLLH. The chain crosses the membrane as a helical span at residues 273-292; the sequence is IALLVLFVIIIYAIIGLELF. Residues 293 to 380 lie on the Extracellular side of the membrane; the sequence is IGKMHKTCFF…WMNDAMGFEL (88 aa). Asn328 carries N-linked (GlcNAc...) asparagine glycosylation. Residue Glu363 participates in Ca(2+) binding. A helical transmembrane segment spans residues 381–405; it reads PWVYFVSLVIFGSFFVLNLVLGVLS. Residues 406-522 are Cytoplasmic-facing; the sequence is GEFSKEREKA…RRCRAAVKSV (117 aa). The interval 428 to 445 is binding to the beta subunit; it reads EQLEEDLKGYLDWITQAE. Positions 448 to 487 are disordered; sequence DPENEEEGGEEGKRNTSMPTSETESVNTENVSGEGETQGS. Residues 462-487 are compositionally biased toward polar residues; the sequence is NTSMPTSETESVNTENVSGEGETQGS. One copy of the II repeat lies at 508–754; that stretch reads NRFNRRRCRA…VFLAIAVDNL (247 aa). Residues 523 to 542 traverse the membrane as a helical segment; the sequence is TFYWLVIVLVFLNTLTISSE. Residues 543-557 lie on the Extracellular side of the membrane; sequence HYNQPDWLTQIQDIA. The chain crosses the membrane as a helical span at residues 558-576; the sequence is NKVLLALFTCEMLVKMYSL. Topologically, residues 577-584 are cytoplasmic; sequence GLQAYFVS. The chain crosses the membrane as a helical span at residues 585 to 603; the sequence is LFNRFDCFVVCGGITETIL. Over 604 to 613 the chain is Extracellular; sequence VELELMSPLG. A helical membrane pass occupies residues 614–632; it reads VSVFRCVRLLRIFKVTRHW. Residues 633-651 lie on the Cytoplasmic side of the membrane; sequence TSLSNLVASLLNSMKSIAS. Residues 652 to 672 form a helical membrane-spanning segment; it reads LLLLLFLFIIIFSLLGMQLFG. Residues 673–726 lie on the Extracellular side of the membrane; sequence GKFNFDETQTKRSTFDNFPQALLTVFQILTGEDWNAVMYDGIMAYGGPSSSGMI. Glu704 serves as a coordination point for Ca(2+). Residues 727–751 form a helical membrane-spanning segment; it reads VCIYFIILFICGNYILLNVFLAIAV. At 752–884 the chain is on the cytoplasmic side; it reads DNLADAESLN…VGCHKLINHH (133 aa). Basic and acidic residues predominate over residues 765 to 789; it reads KEEAEEKERKKIARKESLENKKNNK. Positions 765–846 are disordered; sequence KEEAEEKERK…VPAGPRPRRI (82 aa). Polar residues predominate over residues 790–801; that stretch reads PEVNQIANSDNK. The segment covering 824-836 has biased composition (acidic residues); sequence VGEEEEEEEEEPE. The stretch at 871 to 1153 is one III repeat; it reads NPIRVGCHKL…IFVGFVIVTF (283 aa). A helical membrane pass occupies residues 885–903; the sequence is IFTNLILVFIMLSSAALAA. Topologically, residues 904–919 are extracellular; sequence EDPIRSHSFRNTILGY. The helical transmembrane segment at 920 to 939 threads the bilayer; it reads FDYAFTAIFTVEILLKMTTF. At 940 to 951 the chain is on the cytoplasmic side; the sequence is GAFLHKGAFCRN. The helical transmembrane segment at 952 to 970 threads the bilayer; sequence YFNLLDMLVVGVSLVSFGI. The Extracellular portion of the chain corresponds to 971–976; the sequence is QSSAIS. Residues 977 to 996 form a helical membrane-spanning segment; the sequence is VVKILRVLRVLRPLRAINRA. The Cytoplasmic segment spans residues 997–1015; sequence KGLKHVVQCVFVAIRTIGN. A helical transmembrane segment spans residues 1016–1035; the sequence is IMIVTTLLQFMFACIGVQLF. The Extracellular portion of the chain corresponds to 1036–1125; it reads KGKFYRCTDE…AGPVYNHRVE (90 aa). The dihydropyridine binding stretch occupies residues 1073–1163; it reads RIWQNSDFNF…QEQGEKEYKN (91 aa). Residue Glu1099 participates in Ca(2+) binding. The chain crosses the membrane as a helical span at residues 1126–1146; the sequence is ISIFFIIYIIIVAFFMMNIFV. The Cytoplasmic segment spans residues 1147–1203; the sequence is GFVIVTFQEQGEKEYKNCELDKNQRQCVEYALKARPLRRYIPKNPYQYKFWYVVNSS. Residues 1190–1465 form an IV repeat; it reads NPYQYKFWYV…LFVAVIMDNF (276 aa). The chain crosses the membrane as a helical span at residues 1204–1222; the sequence is PFEYMMFVLIMLNTLCLAM. The Extracellular segment spans residues 1223-1237; that stretch reads QHYEQSKMFNDAMDI. Residues 1238 to 1257 traverse the membrane as a helical segment; it reads LNMVFTGVFTVEMVLKVIAF. Topologically, residues 1258–1264 are cytoplasmic; the sequence is KPKGYFS. Residues 1265–1286 traverse the membrane as a helical segment; it reads DAWNTFDSLIVIGSIIDVALSE. Topologically, residues 1287-1311 are extracellular; it reads ADPTESESLPLPTATPGNSEESNRI. Residues 1312-1331 traverse the membrane as a helical segment; it reads SITFFRLFRVMRLVKLLSRG. The Cytoplasmic segment spans residues 1332-1350; sequence EGIRTLLWTFIKSFQALPY. Residues 1351–1370 form a helical membrane-spanning segment; sequence VALLIAMLFFIYAVIGMQMF. Topologically, residues 1371–1437 are extracellular; the sequence is GKVAMRDNNQ…GEEYTCGSNF (67 aa). The segment at 1418-1484 is dihydropyridine binding; it reads LCDPDSDYNP…LGPHHLDEFK (67 aa). Positions 1430–1473 are phenylalkylamine binding; sequence EYTCGSNFAIVYFISFYMLCAFLIINLFVAVIMDNFDYLTRDWS. The chain crosses the membrane as a helical span at residues 1438 to 1462; the sequence is AIVYFISFYMLCAFLIINLFVAVIM. Residues 1463-1610 are Cytoplasmic-facing; it reads DNFDYLTRDW…CFLSPSRSRS (148 aa).

This sequence belongs to the calcium channel alpha-1 subunit (TC 1.A.1.11) family. CACNA1D subfamily. Voltage-dependent calcium channels are multisubunit complexes, consisting of alpha-1, alpha-2, beta and delta subunits in a 1:1:1:1 ratio. The channel activity is directed by the pore-forming and voltage-sensitive alpha-1 subunit. In many cases, this subunit is sufficient to generate voltage-sensitive calcium channel activity. The auxiliary subunits beta and alpha-2/delta linked by a disulfide bridge regulate the channel activity. Interacts with RIMBP2. Interacts with CABP1 and CABP4, resulting in a near elimination of calcium-dependent inactivation of the channel. Expressed in brain, heart and skeletal muscle.

The protein resides in the membrane. It carries out the reaction Ca(2+)(in) = Ca(2+)(out). Voltage-sensitive calcium channels (VSCC) mediate the entry of calcium ions into excitable cells and are also involved in a variety of calcium-dependent processes, including muscle contraction, hormone or neurotransmitter release, gene expression, cell motility, cell division and cell death. The isoform alpha-1D gives rise to L-type calcium currents. Long-lasting (L-type) calcium channels belong to the 'high-voltage activated' (HVA) group. They are blocked by dihydropyridines (DHP), phenylalkylamines, and by benzothiazepines. This is Voltage-dependent L-type calcium channel subunit alpha-1D (CACNA1D) from Mesocricetus auratus (Golden hamster).